Here is a 1580-residue protein sequence, read N- to C-terminus: Collagen alpha-1(XVI) chain (1580 aa).

Residues 1 to 21 (MLTSWAPGLWVLGLWATFSHG) form the signal peptide. N47 carries N-linked (GlcNAc...) asparagine glycosylation. The 182-residue stretch at 50–231 (GFNLIRRLNL…LQQAHIYCDP (182 aa)) folds into the Laminin G-like domain. The tract at residues 232–374 (ELVLEEGCCE…SPDAPLQCVE (143 aa)) is nonhelical region 10 (NC10). The segment at 324–547 (RESNVTLGPS…DPAPAWEGLG (224 aa)) is disordered. N327 carries N-linked (GlcNAc...) asparagine glycosylation. One can recognise a Collagen-like 1 domain in the interval 375–424 (GPKGEKGESGDLGPPGLPGPTGQKGQKGEKGDGGLKGLPGKPGRDGRPGE). A triple-helical region 9 (COL9) with 3 imperfections region spans residues 375–509 (GPKGEKGESG…PGTKGEKGDP (135 aa)). Over residues 449–460 (PGPPGLPGPPGI) the composition is skewed to pro residues. Residues 486–495 (GKEGPGGKPG) show a composition bias toward gly residues. The interval 510–524 (CEVCPTLPEGSQNFV) is nonhelical region 9 (NC9). Positions 525–570 (GLPGKPGPKGEPGDPAPAWEGLGTVGLKGDRGDPGIQGMKGEKGEP) are triple-helical region 8 (COL8) with 1 imperfection. The Cell attachment site signature appears at 555–557 (RGD). The nonhelical region 8 (NC8) stretch occupies residues 571–586 (CSSCSSGVGAQHLGPS). Residues 585 to 598 (PSPGHGLPGLPGTS) show a composition bias toward low complexity. Residues 585–935 (PSPGHGLPGL…LPGQPGLTAE (351 aa)) form a disordered region. The tract at residues 587 to 640 (PGHGLPGLPGTSGIPGPRGLKGEKGSFGDTGPAGVPGSPGPVGPAGIKGAKGEP) is triple-helical region 7 (COL7) with 1 imperfection. Collagen-like domains follow at residues 590–643 (GLPG…PCEP) and 676–725 (GLPG…PAGP). A nonhelical region 7 (NC7) region spans residues 641 to 661 (CEPCTALSELQDGDMRVVHLP). A triple-helical region 6 (COL6) with 1 imperfection region spans residues 662–732 (GPAGEKGEPG…AGPKGEKGDG (71 aa)). The span at 683–693 (KAGERGLKGQK) shows a compositional bias: basic and acidic residues. Residues 698–714 (NPGDPGTPGITGQPGIS) are compositionally biased toward low complexity. The nonhelical region 6 (NC6) stretch occupies residues 733 to 747 (CTACPSLQGALTDVS). The segment at 748 to 870 (GLPGKPGPKG…RGEKGEPGEC (123 aa)) is triple-helical region 5 (COL5) with 3 imperfections. Positions 797–848 (GAEGPQGEPGTQGLPGTQGLPGPRGPPGSAGEKGAQGSPGPKGAIGPMGPPG) constitute a Collagen-like 4 domain. Low complexity predominate over residues 801 to 817 (PQGEPGTQGLPGTQGLP). Residues 871 to 881 (SCPSRGEPIFS) form a nonhelical region 5 (NC5) region. Positions 882–933 (GMPGAPGLWMGSSSQPGPQGPPGVPGPPGPPGMPGLQGVPGHNGLPGQPGLT) are triple-helical region 4 (COL4) with 2 imperfections. Positions 899-914 (PQGPPGVPGPPGPPGM) are enriched in pro residues. The segment at 934–967 (AELGSLPIEKHLLKSICGDCAQGQTAHPAFLLEK) is nonhelical region 4 (NC4). The segment at 968–982 (GEKGDQGIPGVPGFD) is triple-helical region 3 (COL3). Residues 983 to 1005 (NCARCFIERERPRAEEARGDNSE) form a nonhelical region 3 (NC3) region. 2 disordered regions span residues 995–1405 (RAEE…LPGS) and 1445–1523 (AAAP…GYGK). A Cell attachment site motif is present at residues 1000–1002 (RGD). In terms of domain architecture, Collagen-like 5 spans 1006 to 1063 (GEPGCSGSPGLPGPPGMPGQRGEEGPPGMRGSPGPPGPIGLQGERGLTGLTGDKGEPG). Residues 1006–1409 (GEPGCSGSPG…PGLPGSMGDM (404 aa)) are triple-helical region 2 (COL2) with 2 imperfections. Over residues 1098-1107 (SGPPGSEGLP) the composition is skewed to low complexity. 2 stretches are compositionally biased toward pro residues: residues 1139-1148 (FPGPPGPPGF) and 1178-1187 (SPGPPGPPGI). Residues 1196–1205 (LDGKDGKPGL) are compositionally biased toward basic and acidic residues. The Cell attachment site motif lies at 1206–1208 (RGD). The Collagen-like 6 domain maps to 1210-1263 (GPAGPPGLMGPPGFKGKTGHPGLPGPKGDCGKPGPPGSSGRPGAEGEPGAMGPQ). Residues 1247 to 1263 (SSGRPGAEGEPGAMGPQ) are compositionally biased toward low complexity. Over residues 1265 to 1281 (RPGPPGHLGPPGQPGPP) the composition is skewed to pro residues. Collagen-like domains are found at residues 1350–1407 (GQKG…GSMG), 1448–1500 (PGRP…GDIG), and 1504–1552 (AGEN…GKAG). Residues 1362–1371 (GMPGGPGKSG) show a composition bias toward gly residues. Over residues 1396–1405 (NPGLPGLPGS) the composition is skewed to low complexity. Positions 1410 to 1448 (VNYDDIKRFIRQEIIKLFDERMAYYTSRMQFPMEVAAAP) are nonhelical region 2 (NC2). Positions 1449-1554 (GRPGPPGKDG…MGQPGKAGHC (106 aa)) are triple-helical region 1 (COL1) with 2 imperfections. Positions 1555-1580 (NPSDCFGAMPMEQQYPPMKSMKGPFG) are nonhelical region 1 (NC1).

This sequence belongs to the fibril-associated collagens with interrupted helices (FACIT) family. As to quaternary structure, homotrimer. Interacts with FBN1, fibronectin and integrins ITGA1/ITGB1 and ITGA2/ITGB1. Integrin ITGA1/ITGB1 binds to a unique site within COL16A1 located close to its C-terminal end between collagenous domains COL1-COL3. In terms of processing, prolines at the third position of the tripeptide repeating unit (G-X-Y) are hydroxylated in some or all of the chains. Post-translationally, glycosylated. In terms of tissue distribution, expressed in most tissues examined with highest levels of expression observed in heart. Strongly expressed in cortical and medullar regions of kidney and more weakly expressed in lung. Also detected in the ciliary muscle of the eye, on the serosa layer lining the muscularis externa of intestinal tissue, and in the perimysium membrane lining both the cardiac muscle bundle and the smooth muscle tissue of the small intestine. Strongly stained in particulate or granular structures. Not detected in brain or skeletal muscle.

It is found in the secreted. The protein resides in the extracellular space. Its subcellular location is the extracellular matrix. In terms of biological role, involved in mediating cell attachment and inducing integrin-mediated cellular reactions, such as cell spreading and alterations in cell morphology. This chain is Collagen alpha-1(XVI) chain, found in Mus musculus (Mouse).